A 124-amino-acid polypeptide reads, in one-letter code: Protein Rev (124 aa).

Residue Ser-5 is modified to Phosphoserine; by host CK2. The interval 19-27 (IIKILYQSN) is homomultimerization. A disordered region spans residues 25 to 51 (QSNPYPSPEGTRKARRNRRRRWRARQK). The Nuclear localization signal and RNA-binding (RRE) motif lies at 35–51 (TRKARRNRRRRWRARQK). A compositionally biased stretch (basic residues) spans 37–50 (KARRNRRRRWRARQ). The Nuclear export signal and binding to XPO1 motif lies at 74–85 (LELPELDKLSLQ). The span at 90–106 (TQDVGTSNTSQPQTATG) shows a compositional bias: polar residues. The tract at residues 90-124 (TQDVGTSNTSQPQTATGETVPAGGNYSILGKGAKN) is disordered.

The protein belongs to the HIV-1 REV protein family. In terms of assembly, homomultimer; when bound to the RRE. Multimeric assembly is essential for activity and may involve XPO1. Binds to human KPNB1, XPO1, TNPO1, RANBP5 and IPO7. Interacts with the viral Integrase. Interacts with human KHDRBS1. Interacts with human NAP1; this interaction decreases Rev multimerization and stimulates its activity. Interacts with human DEAD-box helicases DDX3 and DDX24; these interactions may serve for viral RNA export to the cytoplasm and packaging, respectively. Interacts with human PSIP1; this interaction may inhibit HIV-1 DNA integration by promoting dissociation of the Integrase-LEDGF/p75 complex. Post-translationally, asymmetrically arginine dimethylated at one site by host PRMT6. Methylation impairs the RNA-binding activity and export of viral RNA from the nucleus to the cytoplasm. Phosphorylated by protein kinase CK2. Presence of, and maybe binding to the N-terminus of the regulatory beta subunit of CK2 is necessary for CK2-mediated Rev's phosphorylation.

The protein localises to the host nucleus. Its subcellular location is the host nucleolus. The protein resides in the host cytoplasm. Its function is as follows. Escorts unspliced or incompletely spliced viral pre-mRNAs (late transcripts) out of the nucleus of infected cells. These pre-mRNAs carry a recognition sequence called Rev responsive element (RRE) located in the env gene, that is not present in fully spliced viral mRNAs (early transcripts). This function is essential since most viral proteins are translated from unspliced or partially spliced pre-mRNAs which cannot exit the nucleus by the pathway used by fully processed cellular mRNAs. Rev itself is translated from a fully spliced mRNA that readily exits the nucleus. Rev's nuclear localization signal (NLS) binds directly to KPNB1/Importin beta-1 without previous binding to KPNA1/Importin alpha-1. KPNB1 binds to the GDP bound form of RAN (Ran-GDP) and targets Rev to the nucleus. In the nucleus, the conversion from Ran-GDP to Ran-GTP dissociates Rev from KPNB1 and allows Rev's binding to the RRE in viral pre-mRNAs. Rev multimerization on the RRE via cooperative assembly exposes its nuclear export signal (NES) to the surface. Rev can then form a complex with XPO1/CRM1 and Ran-GTP, leading to nuclear export of the complex. Conversion from Ran-GTP to Ran-GDP mediates dissociation of the Rev/RRE/XPO1/RAN complex, so that Rev can return to the nucleus for a subsequent round of export. Beside KPNB1, also seems to interact with TNPO1/Transportin-1, RANBP5/IPO5 and IPO7/RANBP7 for nuclear import. The nucleoporin-like HRB/RIP is an essential cofactor that probably indirectly interacts with Rev to release HIV RNAs from the perinuclear region to the cytoplasm. The chain is Protein Rev from Pan (chimpanzees).